Reading from the N-terminus, the 130-residue chain is Con-Ins M1 (130 aa).

The first 21 residues, methionine 1 to serine 21, serve as a signal peptide directing secretion. Disulfide bonds link cysteine 29-cysteine 107, cysteine 41-cysteine 110, cysteine 53-cysteine 123, and cysteine 109-cysteine 114. Proline 34 carries the post-translational modification 4-hydroxyproline; partial. The propeptide at alanine 59–arginine 92 is c peptide. Glutamate 118 is subject to 4-carboxyglutamate; partial. Serine 129 carries the serine amide modification.

The protein belongs to the insulin family. Heterodimer of A and B chains; disulfide-linked. As to expression, expressed by the venom gland.

Its subcellular location is the secreted. Its function is as follows. This venom insulin facilitates prey capture by rapidly inducing hypoglycemic shock. Intraperitoneal injection of this peptide into zebrafish lowers blood glucose with the same potency than human insulin. In vivo, when applied to water, this peptide reduces overall locomotor activity of zebrafish larvae, observed as a significant decrease in the percentage of time spent swimming and movement frequency. This is Con-Ins M1 from Conus marmoreus (Marble cone).